A 697-amino-acid chain; its full sequence is MPDLLIELFSEEIPARMQARAREDLKKLVTDGLVEAGLTYASAGAFSTPRRLVLSVEGLSAESPTLREERKGPKADAPAAAIEGFLRSTGLTRDRLETREDKKGAVLFAVVEKPGRPAPEIVAEVLERTIRTFPWPKSMRWGTGSLRWVRPLQSILCLLSDEGGAEVVPMTLDGLTAGNSTEGHRFMAPARFAVSGFEDYRAKLGRAFVMLDASEREQAIWHEATTQAFAQGLEVVPDAALLSEVAGLVEWPVVLMGAIGEDFLGLPPEVLQTSMREHQKFFSVTNPATGRIEKFVTVANRETADHGETILKGNGKVLSARLSDARFFWENDLRTVKTAGLEGMAEGLKQVTFHNRLGSQADRIARIEALAREIAPLVGASPDLAAEAARVAKADLQSAMVGEFPELQGTMGSYYARAAGLPEAVAQACKAHYQPLGPSDAVPTDPVSVAVALADKIDTLAGFWRIGEKPTGSKDPFALRRAALGVIRLLLTNNSRAGLMGIMLPAMNRHLEPFDTSDFTPYERELLSFFHDRLKVHLREQGIRHDVIDACLAMPGNDDLTLLVKRAEALSAFLKTDDGTNLLQGFKRANNILTQAEAKDGVEYSFGADPKFAETDAERALFAALETAEAAIGPALQAEDFAAAMSAMAALRAPIDAFFETVQVNADNAVLRRNRLNMLHSIRATCARVADLTRIEG.

This sequence belongs to the class-II aminoacyl-tRNA synthetase family. As to quaternary structure, tetramer of two alpha and two beta subunits.

The protein resides in the cytoplasm. The enzyme catalyses tRNA(Gly) + glycine + ATP = glycyl-tRNA(Gly) + AMP + diphosphate. This is Glycine--tRNA ligase beta subunit from Cereibacter sphaeroides (strain ATCC 17029 / ATH 2.4.9) (Rhodobacter sphaeroides).